A 161-amino-acid chain; its full sequence is D-amino-acid N-acetyltransferase HPA3 (161 aa).

At Ser2 the chain carries N-acetylserine. In terms of domain architecture, N-acetyltransferase spans Ile14–Tyr161. An acetyl-CoA-binding site is contributed by Leu98 to Arg111.

The protein belongs to the acetyltransferase family. GNAT subfamily. In terms of processing, autoacetylates in an intermolecular reaction.

The protein localises to the cytoplasm. It is found in the nucleus. The enzyme catalyses a D-alpha-amino acid + acetyl-CoA = an N-acetyl-D-amino acid + CoA + H(+). N-acetyltransferase that acts on a wide range of D-amino acids. Catalyzes the N-acetylation through an ordered bi-bi mechanism, in which acetyl-CoA is the first substrate to be bound and CoA is the last product to be liberated. D-amino acids are toxic for the cell and their N-acetylation, preceding removal from cells, plays an important role in detoxification of D-amino acids. In vitro, capable of acetylating histone H4 at 'Lys-8' and polyamines like putrescine, spermidine and spermine. This is D-amino-acid N-acetyltransferase HPA3 from Saccharomyces cerevisiae (strain ATCC 204508 / S288c) (Baker's yeast).